The chain runs to 574 residues: MRFSQFYAPTLKEAPADAEVPSQELLTRAGFIRKIAAGVYTYLPLGRRVLLKIEKIVREEMDNIGANEILMPIIQPAELWKQSGRWEDYGPEMMKLKDRHGRDFTLGPTHEELVTFLVQNELNSYKQLPITLYQMANKYRDEIRPRFGVLRAREFIMKDGYSFHSDWESLDETYKAHRKAYSNIMERIGLKYAVVEASSGAIGGNESHEFVAFADTGESNVLFCECGYAGNDERVPYTGEIIYDNEELKGMEKVYTPNVKTAQDVADFLGVPVRKIVKTLIYKGRNGYFMALVPGDRELNEEKLKNFLNDQSLAFATPDDILKDFGVPIGFLGPVGVKGIKVIADHLVKGMKNFVVGGMEKDYHFVNVNVDRDFKVDELADLIVTREGDPCPVCGKPLNAKKGIELGHIFKLGTKYSEAMGSKYMDKDGQLKPFIMGCYGWGVSRTLGAIVEQLHDEKGIIWPLSVAPFAVVITPVSNNENLMKFSEELYNFLVEKGEEVLLDDRNISPGMKFNDADLIGIPFRVTVGKALSEGMVEIKWRTGQQFKVKATLEEIYEFLQKSKQEYDPHKRVEK.

It belongs to the class-II aminoacyl-tRNA synthetase family. ProS type 1 subfamily. Homodimer.

The protein localises to the cytoplasm. The catalysed reaction is tRNA(Pro) + L-proline + ATP = L-prolyl-tRNA(Pro) + AMP + diphosphate. Functionally, catalyzes the attachment of proline to tRNA(Pro) in a two-step reaction: proline is first activated by ATP to form Pro-AMP and then transferred to the acceptor end of tRNA(Pro). As ProRS can inadvertently accommodate and process non-cognate amino acids such as alanine and cysteine, to avoid such errors it has two additional distinct editing activities against alanine. One activity is designated as 'pretransfer' editing and involves the tRNA(Pro)-independent hydrolysis of activated Ala-AMP. The other activity is designated 'posttransfer' editing and involves deacylation of mischarged Ala-tRNA(Pro). The misacylated Cys-tRNA(Pro) is not edited by ProRS. In Fervidobacterium nodosum (strain ATCC 35602 / DSM 5306 / Rt17-B1), this protein is Proline--tRNA ligase.